A 488-amino-acid polypeptide reads, in one-letter code: Glutamyl-tRNA(Gln) amidotransferase subunit A (488 aa).

Catalysis depends on charge relay system residues Lys-77 and Ser-152. Catalysis depends on Ser-176, which acts as the Acyl-ester intermediate.

The protein belongs to the amidase family. GatA subfamily. Heterotrimer of A, B and C subunits.

It carries out the reaction L-glutamyl-tRNA(Gln) + L-glutamine + ATP + H2O = L-glutaminyl-tRNA(Gln) + L-glutamate + ADP + phosphate + H(+). Functionally, allows the formation of correctly charged Gln-tRNA(Gln) through the transamidation of misacylated Glu-tRNA(Gln) in organisms which lack glutaminyl-tRNA synthetase. The reaction takes place in the presence of glutamine and ATP through an activated gamma-phospho-Glu-tRNA(Gln). The chain is Glutamyl-tRNA(Gln) amidotransferase subunit A from Streptococcus pneumoniae (strain ATCC 700669 / Spain 23F-1).